Reading from the N-terminus, the 172-residue chain is Resuscitation-promoting factor RpfE (172 aa).

A signal peptide spans 1–28 (MKNARTTLIAAAIAGTLVTTSPAGIANA). Residues 33–89 (LDPNAAAGPDAVGFDPNLPPAPDAAPVDTPPAPEDAGFDPNLPPPLAPDFLSPPAEE) are disordered. The span at 49–65 (NLPPAPDAAPVDTPPAP) shows a compositional bias: pro residues.

It belongs to the transglycosylase family. Rpf subfamily. Interacts with RipA.

In terms of biological role, factor that stimulates resuscitation of dormant cells. Has peptidoglycan (PG) hydrolytic activity. Active in the pM concentration range. Has little to no effect on actively-growing cells. PG fragments could either directly activate the resuscitation pathway of dormant bacteria or serve as a substrate for endogenous Rpf, resulting in low molecular weight products with resuscitation activity. Its function is as follows. Stimulates growth of stationary phase M.bovis (a slow-growing Mycobacterium), reduces the lag phase of diluted fast-growers M.smegmatis and Micrococcus luteus. Sequential gene disruption indicates RpfB and RpfE are higher than RpfD and RpfC in functional hierarchy. In Mycobacterium tuberculosis (strain ATCC 25618 / H37Rv), this protein is Resuscitation-promoting factor RpfE (rpfE).